A 131-amino-acid chain; its full sequence is Ribosome-binding factor A (131 aa).

Belongs to the RbfA family. In terms of assembly, monomer. Binds 30S ribosomal subunits, but not 50S ribosomal subunits or 70S ribosomes.

It is found in the cytoplasm. Functionally, one of several proteins that assist in the late maturation steps of the functional core of the 30S ribosomal subunit. Associates with free 30S ribosomal subunits (but not with 30S subunits that are part of 70S ribosomes or polysomes). Required for efficient processing of 16S rRNA. May interact with the 5'-terminal helix region of 16S rRNA. In Thermotoga sp. (strain RQ2), this protein is Ribosome-binding factor A.